The following is a 127-amino-acid chain: MRNAAIQHIEAKFLRQDVTVFNTGDSVRVHWKVKEGEKERVQAFEGIVIRKTKGNHRATFTVRKLSFGVGVERVFPLHSPRYEKIEVLSRGDVNRKRLFYLRALKGKAARVDVIEEPKPSKKAASAS.

It belongs to the bacterial ribosomal protein bL19 family.

Its function is as follows. This protein is located at the 30S-50S ribosomal subunit interface and may play a role in the structure and function of the aminoacyl-tRNA binding site. The chain is Large ribosomal subunit protein bL19 from Myxococcus xanthus (strain DK1622).